A 173-amino-acid polypeptide reads, in one-letter code: Small ribosomal subunit protein uS9 (173 aa).

The segment covering 1 to 15 (MTDTPTENLENTEVT) has biased composition (polar residues). Disordered stretches follow at residues 1–26 (MTDTPTENLENTEVTPFTEGDREIAY) and 135–173 (EASRPALKKAGMLTRDARVKERKKAGLKKARKAPQYSKR). Residues 154–173 (KERKKAGLKKARKAPQYSKR) are compositionally biased toward basic residues.

The protein belongs to the universal ribosomal protein uS9 family.

In Cutibacterium acnes (strain DSM 16379 / KPA171202) (Propionibacterium acnes), this protein is Small ribosomal subunit protein uS9.